We begin with the raw amino-acid sequence, 534 residues long: Protein FAM83D (534 aa).

Disordered regions lie at residues 320–372 and 501–534; these read TPPS…STLG and GLNRGRKAQQEARQPNTNIDSGIMGTWPKSRGLQ. Residues 329-342 are compositionally biased toward polar residues; the sequence is TKPQAERLTSTPAR. Basic and acidic residues predominate over residues 350-362; it reads RMNKDIEEPDRKS. Residues 511–520 show a composition bias toward polar residues; the sequence is EARQPNTNID.

The protein belongs to the FAM83 family.

Its subcellular location is the cytoplasm. It localises to the cytoskeleton. The protein localises to the spindle. It is found in the spindle pole. In terms of biological role, may regulate cell proliferation, growth, migration and epithelial to mesenchymal transition. May also be important for proper chromosome congression and alignment during mitosis. In Danio rerio (Zebrafish), this protein is Protein FAM83D.